A 259-amino-acid polypeptide reads, in one-letter code: Protein unc-50 homolog (259 aa).

Residue methionine 1 is modified to N-acetylmethionine. Residues 1–17 (MLPSTSVNSPAQGNGVL) are compositionally biased toward polar residues. Residues 1 to 22 (MLPSTSVNSPAQGNGVLSSRDA) form a disordered region. Topologically, residues 1 to 82 (MLPSTSVNSP…TKDQWARDDP (82 aa)) are cytoplasmic. Phosphoserine is present on serine 6. Residues 83 to 103 (AFLVLLSIWLCVSTIGFGFVL) form a helical membrane-spanning segment. Over 104-115 (DMGFFETIKLLL) the chain is Lumenal. Residues 116 to 136 (WVVFIDCVGVGLLISTLMWFI) traverse the membrane as a helical segment. Residues 137–163 (SNKYLVKRQSRDYDVEWGYAFDVHLNA) are Cytoplasmic-facing. A helical membrane pass occupies residues 164 to 184 (FYPLLVILHFIQLFFINHVIL). Residues 185 to 187 (TDT) lie on the Lumenal side of the membrane. The chain crosses the membrane as a helical span at residues 188 to 208 (FIGYLVGNTLWLVAVGYYIYV). Residues 209 to 222 (TFLGYSALPFLKNT) lie on the Cytoplasmic side of the membrane. The chain crosses the membrane as a helical span at residues 223 to 243 (VILLYPFAPLILLYGLSLALG). Over 244–259 (WNFTHTLCSFYKYRVK) the chain is Lumenal.

Belongs to the unc-50 family.

The protein localises to the nucleus inner membrane. Its subcellular location is the golgi apparatus membrane. Involved in the cell surface expression of neuronal nicotinic receptors. Binds RNA. The protein is Protein unc-50 homolog (UNC50) of Bos taurus (Bovine).